The primary structure comprises 45 residues: uncharacterized protein (45 aa).

This is an uncharacterized protein from Acidianus two-tailed virus (ATV).